Here is a 301-residue protein sequence, read N- to C-terminus: MSTDKTYCGFIAIVGRPNVGKSTLLNKLLGQKISITSRKAQTTRHRIVGIHTEGPYQAIYVDTPGLHMEEKRAINRLMNKAASSSIGDVELVIFVVEGTRWTPDDEMVLNKLRDGKAPVILAVNKVDNVQEKVDLLPHLQFLASQMNFLDIVPISAETGMNVDTIAGIVRKHLPEAIHHFPEDYITDRSQRFMASEIIREKLMRFLGAELPYSVTVEIERFVTNERGGYDINGLILVEREGQKKMVIGNKGAKIKTIGIEARKDMQEMFEAPVHLELWVKVKSGWADDERALRSLGYVDDL.

The Era-type G domain maps to 7–175; sequence YCGFIAIVGR…AGIVRKHLPE (169 aa). The segment at 15 to 22 is G1; the sequence is GRPNVGKS. A GTP-binding site is contributed by 15-22; it reads GRPNVGKS. The G2 stretch occupies residues 41–45; that stretch reads QTTRH. The tract at residues 62 to 65 is G3; that stretch reads DTPG. GTP is bound by residues 62 to 66 and 124 to 127; these read DTPGL and NKVD. The tract at residues 124–127 is G4; it reads NKVD. Residues 154-156 are G5; that stretch reads ISA. Positions 206-283 constitute a KH type-2 domain; that stretch reads LGAELPYSVT…HLELWVKVKS (78 aa).

The protein belongs to the TRAFAC class TrmE-Era-EngA-EngB-Septin-like GTPase superfamily. Era GTPase family. Monomer.

The protein resides in the cytoplasm. The protein localises to the cell inner membrane. An essential GTPase that binds both GDP and GTP, with rapid nucleotide exchange. Plays a role in 16S rRNA processing and 30S ribosomal subunit biogenesis and possibly also in cell cycle regulation and energy metabolism. This chain is GTPase Era, found in Salmonella heidelberg (strain SL476).